A 656-amino-acid chain; its full sequence is Translation factor GUF1 homolog, mitochondrial (656 aa).

Residues 55 to 236 (QRIRNFSIIA…EIVRRLPPPD (182 aa)) form the tr-type G domain. GTP contacts are provided by residues 64–71 (AHVDHGKS), 129–133 (DTPGH), and 183–186 (NKID).

This sequence belongs to the TRAFAC class translation factor GTPase superfamily. Classic translation factor GTPase family. LepA subfamily.

It is found in the mitochondrion inner membrane. The catalysed reaction is GTP + H2O = GDP + phosphate + H(+). In terms of biological role, promotes mitochondrial protein synthesis. May act as a fidelity factor of the translation reaction, by catalyzing a one-codon backward translocation of tRNAs on improperly translocated ribosomes. Binds to mitochondrial ribosomes in a GTP-dependent manner. This Aedes aegypti (Yellowfever mosquito) protein is Translation factor GUF1 homolog, mitochondrial.